The primary structure comprises 423 residues: Histidine--tRNA ligase (423 aa).

The protein belongs to the class-II aminoacyl-tRNA synthetase family. Homodimer.

The protein resides in the cytoplasm. It catalyses the reaction tRNA(His) + L-histidine + ATP = L-histidyl-tRNA(His) + AMP + diphosphate + H(+). The chain is Histidine--tRNA ligase from Anoxybacillus flavithermus (strain DSM 21510 / WK1).